Consider the following 407-residue polypeptide: Negative RAS protein regulator protein (407 aa).

3 disordered regions span residues 51-94 (PRII…ARQI), 165-187 (HPSK…NLNF), and 241-273 (NNNN…NVFS). Residues 55-73 (SSSNSNSNSNSNSNSNSNS) show a composition bias toward low complexity. A Myb-like domain is found at 90–158 (SARQIRKKWK…QCHDRFKVLY (69 aa)). Basic residues predominate over residues 165–177 (HPSKKSKQKKKKS). Low complexity predominate over residues 241 to 270 (NNNNNNINNSNNSNNNNSNNINRNSNHSTN).

The protein resides in the nucleus. In terms of biological role, negative regulator of the Ras-cyclic AMP pathway. Negatively regulate the activity of normal but not mutationally activated Ras proteins. The down-regulatory effect of RPI1 requires the presence of one of the two Ras GTPase activators, IRA1 and IRA2. This Saccharomyces cerevisiae (strain ATCC 204508 / S288c) (Baker's yeast) protein is Negative RAS protein regulator protein (RPI1).